The primary structure comprises 212 residues: Protein-L-isoaspartate O-methyltransferase 1 (212 aa).

The active site involves serine 60.

This sequence belongs to the methyltransferase superfamily. L-isoaspartyl/D-aspartyl protein methyltransferase family.

It is found in the cytoplasm. It catalyses the reaction [protein]-L-isoaspartate + S-adenosyl-L-methionine = [protein]-L-isoaspartate alpha-methyl ester + S-adenosyl-L-homocysteine. Functionally, catalyzes the methyl esterification of L-isoaspartyl residues in peptides and proteins that result from spontaneous decomposition of normal L-aspartyl and L-asparaginyl residues. It plays a role in the repair and/or degradation of damaged proteins. The sequence is that of Protein-L-isoaspartate O-methyltransferase 1 from Anaeromyxobacter sp. (strain Fw109-5).